The primary structure comprises 429 residues: Probable M18 family aminopeptidase 2 (429 aa).

Zn(2+)-binding residues include H82, H156, and H401.

The protein belongs to the peptidase M18 family. Zn(2+) serves as cofactor.

In Pseudomonas putida (strain GB-1), this protein is Probable M18 family aminopeptidase 2.